Here is a 302-residue protein sequence, read N- to C-terminus: Large ribosomal subunit protein uL29m (302 aa).

The transit peptide at 1 to 38 (MASSGAARPAASRVLQRCQPFSSSTSCAAPVTTWRTLA) directs the protein to the mitochondrion. Positions 255–302 (EPVADHLETPETSGQEKVGELSPAGAVDPSTILASKTGKPVTDAPRSS) are disordered.

It belongs to the universal ribosomal protein uL29 family. As to quaternary structure, component of the mitochondrial large ribosomal subunit. Mature mitochondrial ribosomes consist of a small (37S) and a large (54S) subunit. The 37S subunit contains at least 33 different proteins and 1 molecule of RNA (15S). The 54S subunit contains at least 45 different proteins and 1 molecule of RNA (21S).

It localises to the mitochondrion. This is Large ribosomal subunit protein uL29m (MRPL4) from Pyricularia oryzae (strain 70-15 / ATCC MYA-4617 / FGSC 8958) (Rice blast fungus).